The chain runs to 310 residues: Carbamate kinase 1 (310 aa).

This sequence belongs to the carbamate kinase family.

It localises to the cytoplasm. The enzyme catalyses hydrogencarbonate + NH4(+) + ATP = carbamoyl phosphate + ADP + H2O + H(+). The protein operates within metabolic intermediate metabolism; carbamoyl phosphate degradation; CO(2) and NH(3) from carbamoyl phosphate: step 1/1. The protein is Carbamate kinase 1 (arcC1) of Staphylococcus aureus (strain MRSA252).